We begin with the raw amino-acid sequence, 327 residues long: UPF0065 protein in gbd 5'region (327 aa).

Residues 1–30 (MQRRHFIARAGIAAATAALGLAAMPAQAQA) constitute a signal peptide (tat-type signal).

The protein belongs to the UPF0065 (bug) family. Post-translationally, predicted to be exported by the Tat system. The position of the signal peptide cleavage has not been experimentally proven.

Its subcellular location is the periplasm. The protein is UPF0065 protein in gbd 5'region of Cupriavidus necator (Alcaligenes eutrophus).